The chain runs to 145 residues: Transcription antitermination protein NusB (145 aa).

Belongs to the NusB family.

In terms of biological role, involved in transcription antitermination. Required for transcription of ribosomal RNA (rRNA) genes. Binds specifically to the boxA antiterminator sequence of the ribosomal RNA (rrn) operons. The polypeptide is Transcription antitermination protein NusB (Citrifermentans bemidjiense (strain ATCC BAA-1014 / DSM 16622 / JCM 12645 / Bem) (Geobacter bemidjiensis)).